A 513-amino-acid chain; its full sequence is Glutamyl-tRNA(Gln) amidotransferase subunit A (513 aa).

Catalysis depends on charge relay system residues Lys-85 and Ser-160. The active-site Acyl-ester intermediate is Ser-184.

It belongs to the amidase family. GatA subfamily. Heterotrimer of A, B and C subunits.

It carries out the reaction L-glutamyl-tRNA(Gln) + L-glutamine + ATP + H2O = L-glutaminyl-tRNA(Gln) + L-glutamate + ADP + phosphate + H(+). Functionally, allows the formation of correctly charged Gln-tRNA(Gln) through the transamidation of misacylated Glu-tRNA(Gln) in organisms which lack glutaminyl-tRNA synthetase. The reaction takes place in the presence of glutamine and ATP through an activated gamma-phospho-Glu-tRNA(Gln). The chain is Glutamyl-tRNA(Gln) amidotransferase subunit A from Bifidobacterium longum subsp. infantis (strain ATCC 15697 / DSM 20088 / JCM 1222 / NCTC 11817 / S12).